Here is a 426-residue protein sequence, read N- to C-terminus: Serine--tRNA ligase (426 aa).

The segment covering 1-15 (MIDVKDLSENPDKFR) has biased composition (basic and acidic residues). Residues 1-22 (MIDVKDLSENPDKFRASQRARG) form a disordered region. Residue 228–230 (TSE) coordinates L-serine. Residues 259–261 (RRE) and Val275 each bind ATP. Residue Glu282 coordinates L-serine. 346–349 (ELTS) serves as a coordination point for ATP. Residue Thr386 participates in L-serine binding.

The protein belongs to the class-II aminoacyl-tRNA synthetase family. Type-1 seryl-tRNA synthetase subfamily. Homodimer. The tRNA molecule binds across the dimer.

Its subcellular location is the cytoplasm. It catalyses the reaction tRNA(Ser) + L-serine + ATP = L-seryl-tRNA(Ser) + AMP + diphosphate + H(+). The catalysed reaction is tRNA(Sec) + L-serine + ATP = L-seryl-tRNA(Sec) + AMP + diphosphate + H(+). Its pathway is aminoacyl-tRNA biosynthesis; selenocysteinyl-tRNA(Sec) biosynthesis; L-seryl-tRNA(Sec) from L-serine and tRNA(Sec): step 1/1. Functionally, catalyzes the attachment of serine to tRNA(Ser). Is also able to aminoacylate tRNA(Sec) with serine, to form the misacylated tRNA L-seryl-tRNA(Sec), which will be further converted into selenocysteinyl-tRNA(Sec). This Pseudarthrobacter chlorophenolicus (strain ATCC 700700 / DSM 12829 / CIP 107037 / JCM 12360 / KCTC 9906 / NCIMB 13794 / A6) (Arthrobacter chlorophenolicus) protein is Serine--tRNA ligase.